A 317-amino-acid polypeptide reads, in one-letter code: Acetyl-coenzyme A carboxylase carboxyl transferase subunit alpha (317 aa).

In terms of domain architecture, CoA carboxyltransferase C-terminal spans 39–293 (RLESRVNDAM…GDVIAKALAD (255 aa)).

The protein belongs to the AccA family. In terms of assembly, acetyl-CoA carboxylase is a heterohexamer composed of biotin carboxyl carrier protein (AccB), biotin carboxylase (AccC) and two subunits each of ACCase subunit alpha (AccA) and ACCase subunit beta (AccD).

Its subcellular location is the cytoplasm. The catalysed reaction is N(6)-carboxybiotinyl-L-lysyl-[protein] + acetyl-CoA = N(6)-biotinyl-L-lysyl-[protein] + malonyl-CoA. It functions in the pathway lipid metabolism; malonyl-CoA biosynthesis; malonyl-CoA from acetyl-CoA: step 1/1. Its function is as follows. Component of the acetyl coenzyme A carboxylase (ACC) complex. First, biotin carboxylase catalyzes the carboxylation of biotin on its carrier protein (BCCP) and then the CO(2) group is transferred by the carboxyltransferase to acetyl-CoA to form malonyl-CoA. This is Acetyl-coenzyme A carboxylase carboxyl transferase subunit alpha from Agrobacterium fabrum (strain C58 / ATCC 33970) (Agrobacterium tumefaciens (strain C58)).